Reading from the N-terminus, the 239-residue chain is Tetraspanin-9 (239 aa).

The Cytoplasmic portion of the chain corresponds to 1–13; sequence MARGCLCCLKYMM. The helical transmembrane segment at 14–34 threads the bilayer; that stretch reads FLFNLIFWLCGCGLLGVGIWL. The Extracellular portion of the chain corresponds to 35-55; sequence SVSQGNFATFSPSFPSLSAAN. Residues 56–76 traverse the membrane as a helical segment; the sequence is LVIVIGTVVMVTGFLGCLGAI. At 77–85 the chain is on the cytoplasmic side; the sequence is KENKCLLLS. A helical transmembrane segment spans residues 86 to 106; the sequence is FFIILLIILLTELILLILFFV. Over 107–203 the chain is Extracellular; that stretch reads YMDKVNENAK…VKMWFDDNKH (97 aa). The N-linked (GlcNAc...) asparagine glycan is linked to Asn-180. Residues 204–224 traverse the membrane as a helical segment; it reads VLGTIGMCILIIQILGMAFSM. Over 225-239 the chain is Cytoplasmic; it reads TLFQQIHRTGKKYDA.

This sequence belongs to the tetraspanin (TM4SF) family.

The protein localises to the membrane. This Xenopus laevis (African clawed frog) protein is Tetraspanin-9 (tspan9).